The sequence spans 266 residues: Putative pyruvate, phosphate dikinase regulatory protein (266 aa).

Residue 149-156 (GVSRTSKT) participates in ADP binding.

Belongs to the pyruvate, phosphate/water dikinase regulatory protein family. PDRP subfamily.

The catalysed reaction is N(tele)-phospho-L-histidyl/L-threonyl-[pyruvate, phosphate dikinase] + ADP = N(tele)-phospho-L-histidyl/O-phospho-L-threonyl-[pyruvate, phosphate dikinase] + AMP + H(+). It catalyses the reaction N(tele)-phospho-L-histidyl/O-phospho-L-threonyl-[pyruvate, phosphate dikinase] + phosphate + H(+) = N(tele)-phospho-L-histidyl/L-threonyl-[pyruvate, phosphate dikinase] + diphosphate. In terms of biological role, bifunctional serine/threonine kinase and phosphorylase involved in the regulation of the pyruvate, phosphate dikinase (PPDK) by catalyzing its phosphorylation/dephosphorylation. This chain is Putative pyruvate, phosphate dikinase regulatory protein, found in Geobacillus sp. (strain WCH70).